The primary structure comprises 572 residues: Sulfite reductase [NADPH] hemoprotein beta-component (572 aa).

[4Fe-4S] cluster contacts are provided by cysteine 437, cysteine 443, cysteine 482, and cysteine 486. Residue cysteine 486 participates in siroheme binding.

It belongs to the nitrite and sulfite reductase 4Fe-4S domain family. In terms of assembly, alpha(8)-beta(8). The alpha component is a flavoprotein, the beta component is a hemoprotein. It depends on siroheme as a cofactor. Requires [4Fe-4S] cluster as cofactor.

It carries out the reaction hydrogen sulfide + 3 NADP(+) + 3 H2O = sulfite + 3 NADPH + 4 H(+). The protein operates within sulfur metabolism; hydrogen sulfide biosynthesis; hydrogen sulfide from sulfite (NADPH route): step 1/1. Its function is as follows. Component of the sulfite reductase complex that catalyzes the 6-electron reduction of sulfite to sulfide. This is one of several activities required for the biosynthesis of L-cysteine from sulfate. This is Sulfite reductase [NADPH] hemoprotein beta-component from Staphylococcus epidermidis (strain ATCC 35984 / DSM 28319 / BCRC 17069 / CCUG 31568 / BM 3577 / RP62A).